The following is a 544-amino-acid chain: Chaperonin GroEL (544 aa).

ATP contacts are provided by residues 29–32 (TLGP), K50, 86–90 (DGTTT), G414, 477–479 (DAA), and D493.

It belongs to the chaperonin (HSP60) family. In terms of assembly, forms a cylinder of 14 subunits composed of two heptameric rings stacked back-to-back. Interacts with the co-chaperonin GroES.

The protein resides in the cytoplasm. The catalysed reaction is ATP + H2O + a folded polypeptide = ADP + phosphate + an unfolded polypeptide.. Its function is as follows. Together with its co-chaperonin GroES, plays an essential role in assisting protein folding. The GroEL-GroES system forms a nano-cage that allows encapsulation of the non-native substrate proteins and provides a physical environment optimized to promote and accelerate protein folding. This is Chaperonin GroEL from Hydrogenovibrio crunogenus (strain DSM 25203 / XCL-2) (Thiomicrospira crunogena).